A 1058-amino-acid polypeptide reads, in one-letter code: Probable plasma membrane ATPase (1058 aa).

A compositionally biased stretch (polar residues) spans 1–29 (MDNNQIPKNSPESSAINSAESSPKSNVSS). Residues 1 to 123 (MDNNQIPKNS…SSSGKKEEDY (123 aa)) are disordered. At 1 to 212 (MDNNQIPKNS…DVKRYPILEF (212 aa)) the chain is on the cytoplasmic side. Residues 31 to 40 (VLHENHHKEQ) show a composition bias toward basic and acidic residues. The span at 41-66 (QQLQQQLQQEQQQQQLPTTPQSEPTQ) shows a compositional bias: low complexity. Positions 96 to 111 (SLKTISGYPSSKNTEA) are enriched in polar residues. The chain crosses the membrane as a helical span at residues 213–232 (LYFMWNPLSWTMEVAAIVSI). Topologically, residues 233 to 237 (ALLDW) are extracellular. The helical transmembrane segment at 238 to 258 (VDFILICALLLLNATIGFIEE) threads the bilayer. Residues 259 to 387 (NTAGNAVEAL…GHLQVILRNI (129 aa)) lie on the Cytoplasmic side of the membrane. Residues 388–407 (GLFCISFIAIWVLVELLVDF) form a helical membrane-spanning segment. Residues 408–425 (LGYDGYCHGVGGGRCLPL) are Extracellular-facing. A helical transmembrane segment spans residues 426–447 (NNALVLLVGGIPIAMPTVLSVT). Topologically, residues 448 to 783 (MAIGATQLSK…SSRKIFQRMR (336 aa)) are cytoplasmic. Asp-480 functions as the 4-aspartylphosphate intermediate in the catalytic mechanism. Mg(2+) contacts are provided by Asp-728 and Asp-732. A helical membrane pass occupies residues 784-805 (NYVIYSVAATVRICTTFGILTV). Residues 806 to 810 (AWNFK) lie on the Extracellular side of the membrane. The chain crosses the membrane as a helical span at residues 811 to 833 (FPTIATVIIAILNDGTMLTISKD). Over 834–849 (RVRARNEPDQWNLFEV) the chain is Cytoplasmic. The chain crosses the membrane as a helical span at residues 850–870 (FTMALCYGFYLVGSTIVFFAI). Over 871–889 (IHDGTWFHDAINLRILTDN) the chain is Extracellular. A helical membrane pass occupies residues 890 to 910 (ELRGLIYLQVSISGLATIFVS). The Cytoplasmic segment spans residues 911-922 (RSQGFSYFERPG). A helical membrane pass occupies residues 923–943 (NLVIFAFVMSQIVATFIGVYG). Residues 944–967 (FRGYPHDSFSDNPDYPVHGTNFQG) lie on the Extracellular side of the membrane. A helical transmembrane segment spans residues 968–988 (CGWGWAVCAWIWCFLWYIPMD). The Cytoplasmic segment spans residues 989–1058 (FIKLGVTYIL…HKSVVTDNKV (70 aa)).

This sequence belongs to the cation transport ATPase (P-type) (TC 3.A.3) family. Type IIIA subfamily.

The protein localises to the cell membrane. The catalysed reaction is ATP + H2O + H(+)(in) = ADP + phosphate + 2 H(+)(out). Acid pH levels increase its ATPase activity. Its function is as follows. P-type plasma membrane H+-ATPase (proton pump). The proton gradient it generates drives the active transport of nutrients by H(+) symport. The resulting external acidification and/or internal alkinization may mediate growth responses. This is Probable plasma membrane ATPase (patB) from Dictyostelium discoideum (Social amoeba).